We begin with the raw amino-acid sequence, 229 residues long: MTDFHNKPNIQIMFDSLAPTYDKINGILSLGLHIAWNNALVSLLGETNHLLDLCAGTGRVALSYVQNYPRASATLVDFSTKMLENVQKRHPSAPFSYITSDVTHLPLPDNTFRLASMAYGLRNLSYPLEALREVYRVLQPGGHLGILELTRPATYNPVYLLHKLYLNLVVPSVGRFYSGNSYAYSYLKESIRDLPRDAALEAIFHAAHLRPIRKRKLLFGTATIWILEK.

Residues Thr-57, Asp-77, and 101 to 102 (DV) each bind S-adenosyl-L-methionine.

Belongs to the class I-like SAM-binding methyltransferase superfamily. MenG/UbiE family.

It carries out the reaction a 2-demethylmenaquinol + S-adenosyl-L-methionine = a menaquinol + S-adenosyl-L-homocysteine + H(+). The protein operates within quinol/quinone metabolism; menaquinone biosynthesis; menaquinol from 1,4-dihydroxy-2-naphthoate: step 2/2. Functionally, methyltransferase required for the conversion of demethylmenaquinol (DMKH2) to menaquinol (MKH2). The protein is Demethylmenaquinone methyltransferase of Chlamydia trachomatis serovar A (strain ATCC VR-571B / DSM 19440 / HAR-13).